A 787-amino-acid chain; its full sequence is Protein translocase subunit SecA (787 aa).

Residues glutamine 85, 103–107 (GEGKT), and aspartate 492 contribute to the ATP site.

Belongs to the SecA family. In terms of assembly, monomer and homodimer. Part of the essential Sec protein translocation apparatus which comprises SecA, SecYEG and auxiliary proteins SecDF. Other proteins may also be involved.

Its subcellular location is the cell membrane. The protein resides in the cytoplasm. The catalysed reaction is ATP + H2O + cellular proteinSide 1 = ADP + phosphate + cellular proteinSide 2.. Part of the Sec protein translocase complex. Interacts with the SecYEG preprotein conducting channel. Has a central role in coupling the hydrolysis of ATP to the transfer of proteins into and across the cell membrane, serving as an ATP-driven molecular motor driving the stepwise translocation of polypeptide chains across the membrane. The protein is Protein translocase subunit SecA of Limosilactobacillus reuteri (strain DSM 20016) (Lactobacillus reuteri).